The following is a 162-amino-acid chain: uncharacterized protein (162 aa).

3 helical membrane passes run 7–27 (LIAD…IVGL), 51–71 (LSIL…YMIG), and 134–154 (TYVA…ITIG).

It belongs to the DedA family.

Its subcellular location is the cell membrane. This is an uncharacterized protein from Bacillus subtilis (strain 168).